A 188-amino-acid polypeptide reads, in one-letter code: Elongation factor P (188 aa).

The residue at position 34 (Lys-34) is an N6-(3,6-diaminohexanoyl)-5-hydroxylysine.

This sequence belongs to the elongation factor P family. Post-translationally, may be beta-lysylated on the epsilon-amino group of Lys-34 by the combined action of EpmA and EpmB, and then hydroxylated on the C5 position of the same residue by EpmC (if this protein is present). Lysylation is critical for the stimulatory effect of EF-P on peptide-bond formation. The lysylation moiety may extend toward the peptidyltransferase center and stabilize the terminal 3-CCA end of the tRNA. Hydroxylation of the C5 position on Lys-34 may allow additional potential stabilizing hydrogen-bond interactions with the P-tRNA.

Its subcellular location is the cytoplasm. Its pathway is protein biosynthesis; polypeptide chain elongation. Involved in peptide bond synthesis. Alleviates ribosome stalling that occurs when 3 or more consecutive Pro residues or the sequence PPG is present in a protein, possibly by augmenting the peptidyl transferase activity of the ribosome. Modification of Lys-34 is required for alleviation. This chain is Elongation factor P, found in Actinobacillus succinogenes (strain ATCC 55618 / DSM 22257 / CCUG 43843 / 130Z).